A 296-amino-acid polypeptide reads, in one-letter code: Triplex capsid protein 2 (296 aa).

Belongs to the herpesviridae TRX2 protein family. As to quaternary structure, interacts with TRX1 and major capisd protein/MCP.

The protein resides in the virion. It is found in the host nucleus. In terms of biological role, structural component of the T=16 icosahedral capsid. The capsid is composed of pentamers and hexamers of major capsid protein/MCP, which are linked together by heterotrimers called triplexes. These triplexes are formed by a single molecule of triplex protein 1/TRX1 and two copies of triplex protein 2/TRX2. Additionally, TRX1 is required for efficient transport of TRX2 to the nucleus, which is the site of capsid assembly. In Homo sapiens (Human), this protein is Triplex capsid protein 2.